The chain runs to 271 residues: Aquaporin-2 (271 aa).

The Cytoplasmic segment spans residues 1–11 (MWELRSIAFSR). Residues 12 to 32 (AVLAEFLATLLFVFFGLGSAL) form a helical membrane-spanning segment. Residues 33–40 (NWPQALPS) lie on the Extracellular side of the membrane. Residues 41 to 59 (VLQIAMAFGLAIGTLVQAL) form a helical membrane-spanning segment. Residues 60 to 64 (GHVSG) lie on the Cytoplasmic side of the membrane. An intramembrane region (discontinuously helical) is located at residues 65 to 74 (AHINPAVTVA). Residues 68–70 (NPA) carry the NPA 1 motif. The Cytoplasmic portion of the chain corresponds to 75–85 (CLVGCHVSFLR). Residues 86 to 107 (AVFYVAAQLLGAVAGAALLHEI) form a helical membrane-spanning segment. The Extracellular portion of the chain corresponds to 108–127 (TPPAIRGDLAVNALNNNSTA). N-linked (GlcNAc...) asparagine glycosylation occurs at Asn123. Residues 128-148 (GQAVTVELFLTLQLVLCIFAS) form a helical membrane-spanning segment. Over 149-156 (TDERRGDN) the chain is Cytoplasmic. Residues 157-176 (VGTPALSIGFSVALGHLLGI) traverse the membrane as a helical segment. Residues 177-180 (HYTG) lie on the Extracellular side of the membrane. An intramembrane region (discontinuously helical) is located at residues 181 to 193 (CSMNPARSLAPAI). Positions 184–186 (NPA) match the NPA 2 motif. At 194-201 (VTGKFDDH) the chain is on the extracellular side. The chain crosses the membrane as a helical span at residues 202-222 (WVFWIGPLVGAIVASLLYNYV). Topologically, residues 223-271 (LFPPAKSLSERLAVLKGLEPDTDWEEREVRRRQSVELHSPQSLPRGSKA) are cytoplasmic. Residues 251-271 (VRRRQSVELHSPQSLPRGSKA) form a disordered region. Position 256 is a phosphoserine (Ser256). Over residues 261-271 (SPQSLPRGSKA) the composition is skewed to polar residues.

The protein belongs to the MIP/aquaporin (TC 1.A.8) family. As to quaternary structure, homotetramer. In terms of processing, ser-256 phosphorylation is necessary and sufficient for expression at the apical membrane. Endocytosis is not phosphorylation-dependent. Post-translationally, N-glycosylated.

Its subcellular location is the apical cell membrane. It is found in the basolateral cell membrane. The protein resides in the cell membrane. It localises to the cytoplasmic vesicle membrane. The protein localises to the golgi apparatus. Its subcellular location is the trans-Golgi network membrane. The enzyme catalyses H2O(in) = H2O(out). The catalysed reaction is glycerol(in) = glycerol(out). In terms of biological role, forms a water-specific channel that provides the plasma membranes of renal collecting duct with high permeability to water, thereby permitting water to move in the direction of an osmotic gradient. Could also be permeable to glycerol. The polypeptide is Aquaporin-2 (Bos taurus (Bovine)).